Here is a 118-residue protein sequence, read N- to C-terminus: Putative pterin-4-alpha-carbinolamine dehydratase (118 aa).

It belongs to the pterin-4-alpha-carbinolamine dehydratase family.

It catalyses the reaction (4aS,6R)-4a-hydroxy-L-erythro-5,6,7,8-tetrahydrobiopterin = (6R)-L-erythro-6,7-dihydrobiopterin + H2O. The chain is Putative pterin-4-alpha-carbinolamine dehydratase from Pseudomonas fluorescens (strain SBW25).